The chain runs to 151 residues: Small ribosomal subunit protein bS6 (151 aa).

A disordered region spans residues 97–151; it reads EAEPSAMMQKRDRDDRKDRDRGDRPRRRDDDFGGGDRGDRGDRGDRPERNFGGEN. A compositionally biased stretch (basic and acidic residues) spans 105–151; the sequence is QKRDRDDRKDRDRGDRPRRRDDDFGGGDRGDRGDRGDRPERNFGGEN.

This sequence belongs to the bacterial ribosomal protein bS6 family.

Functionally, binds together with bS18 to 16S ribosomal RNA. The protein is Small ribosomal subunit protein bS6 of Methylorubrum extorquens (strain CM4 / NCIMB 13688) (Methylobacterium extorquens).